Reading from the N-terminus, the 324-residue chain is Methionyl-tRNA formyltransferase (324 aa).

A (6S)-5,6,7,8-tetrahydrofolate-binding site is contributed by 112–115; it reads SILP.

This sequence belongs to the Fmt family.

The catalysed reaction is L-methionyl-tRNA(fMet) + (6R)-10-formyltetrahydrofolate = N-formyl-L-methionyl-tRNA(fMet) + (6S)-5,6,7,8-tetrahydrofolate + H(+). In terms of biological role, attaches a formyl group to the free amino group of methionyl-tRNA(fMet). The formyl group appears to play a dual role in the initiator identity of N-formylmethionyl-tRNA by promoting its recognition by IF2 and preventing the misappropriation of this tRNA by the elongation apparatus. This Shewanella loihica (strain ATCC BAA-1088 / PV-4) protein is Methionyl-tRNA formyltransferase.